The chain runs to 376 residues: Putative peptide import ATP-binding protein BMEII0205 (376 aa).

The tract at residues 1–25 (MPLRPALHLRTGKLRQTPTHNEPDG) is disordered. The ABC transporter domain maps to 64–314 (VRTDDLVRDF…PLHPYSRALL (251 aa)). 106 to 113 (GESGSGKS) provides a ligand contact to ATP.

Belongs to the ABC transporter superfamily. The complex is composed of two ATP-binding proteins (BMEII0205 and BMEII0206), two transmembrane proteins (BMEII0207/BMEII0208 and BMEII0209) and a solute-binding protein (BMEII0210).

It is found in the cell inner membrane. Its function is as follows. Probably part of an ABC transporter complex that could be involved in peptide import. Probably responsible for energy coupling to the transport system. The sequence is that of Putative peptide import ATP-binding protein BMEII0205 from Brucella melitensis biotype 1 (strain ATCC 23456 / CCUG 17765 / NCTC 10094 / 16M).